The chain runs to 72 residues: Metallothionein-like protein 1 (72 aa).

Belongs to the metallothionein superfamily. Type 15 family.

In terms of biological role, metallothioneins have a high content of cysteine residues that bind various heavy metals. The protein is Metallothionein-like protein 1 of Erythranthe guttata (Yellow monkey flower).